A 345-amino-acid chain; its full sequence is S-adenosylmethionine:tRNA ribosyltransferase-isomerase (345 aa).

Belongs to the QueA family. Monomer.

The protein localises to the cytoplasm. It carries out the reaction 7-aminomethyl-7-carbaguanosine(34) in tRNA + S-adenosyl-L-methionine = epoxyqueuosine(34) in tRNA + adenine + L-methionine + 2 H(+). It participates in tRNA modification; tRNA-queuosine biosynthesis. Transfers and isomerizes the ribose moiety from AdoMet to the 7-aminomethyl group of 7-deazaguanine (preQ1-tRNA) to give epoxyqueuosine (oQ-tRNA). This is S-adenosylmethionine:tRNA ribosyltransferase-isomerase from Anaeromyxobacter sp. (strain Fw109-5).